The sequence spans 620 residues: Guanylate cyclase soluble subunit beta-1 (620 aa).

Residue H105 coordinates heme. The region spanning 421-554 (TILFSGIVGF…NTVNLTSRTE (134 aa)) is the Guanylate cyclase domain.

Belongs to the adenylyl cyclase class-4/guanylyl cyclase family. The active enzyme is formed by a heterodimer of an alpha and a beta subunit. Heterodimer with GUCY1A1. Can also form inactive homodimers in vitro. Requires heme as cofactor.

The protein resides in the cytoplasm. It carries out the reaction GTP = 3',5'-cyclic GMP + diphosphate. Its activity is regulated as follows. Activated by nitric oxide in the presence of magnesium or manganese ions. Mediates responses to nitric oxide (NO) by catalyzing the biosynthesis of the signaling molecule cGMP. In Mus musculus (Mouse), this protein is Guanylate cyclase soluble subunit beta-1 (Gucy1b1).